Here is a 169-residue protein sequence, read N- to C-terminus: Putative cysteine protease YraA (169 aa).

Residues 3 to 169 (KKIAVLVTDQ…FNRESLNLLK (167 aa)) form the PfpI endopeptidase domain. Cys103 acts as the Nucleophile in catalysis. Residue His104 is part of the active site.

The protein belongs to the peptidase C56 family.

Functions in the protection against aldehyde-stress, possibly by degrading damaged proteins. This is Putative cysteine protease YraA (yraA) from Bacillus subtilis (strain 168).